The following is a 103-amino-acid chain: MIVTTTSGIQGKEIIEYIDIVNGEAIMGANIVRDLFASVRDVVGGRAGSYESKLKEARDIAMDEMKELAKQKGANAIVGIDVDYEVVRDGMLMVAVSGTAVRI.

This sequence belongs to the UPF0145 family.

The chain is UPF0145 protein BCE_1095 from Bacillus cereus (strain ATCC 10987 / NRS 248).